The following is a 1894-amino-acid chain: Plexin-A1 (1894 aa).

Residues 1 to 27 form the signal peptide; that stretch reads MPLPPLSSRTLLLLLLLLLRGVWIAIS. The region spanning 28-510 is the Sema domain; that stretch reads SPPAGLGPQP…TEKQVTQVPV (483 aa). Topologically, residues 28–1242 are extracellular; sequence SPPAGLGPQP…VYSDSLLTLP (1215 aa). Asparagine 75 carries N-linked (GlcNAc...) asparagine glycosylation. Intrachain disulfides connect cysteine 93–cysteine 102, cysteine 128–cysteine 136, cysteine 284–cysteine 405, cysteine 300–cysteine 356, cysteine 374–cysteine 393, cysteine 513–cysteine 530, cysteine 519–cysteine 561, cysteine 522–cysteine 539, cysteine 533–cysteine 545, and cysteine 596–cysteine 615. N-linked (GlcNAc...) asparagine glycosylation is found at asparagine 658, asparagine 670, and asparagine 699. 4 consecutive IPT/TIG domains span residues 862-957, 959-1043, 1046-1145, and 1148-1234; these read PKIL…FTFV, PTFY…YNYT, PTIL…FLYY, and PVLE…LQVY. An N-linked (GlcNAc...) asparagine glycan is attached at asparagine 1041. Asparagine 1185 and asparagine 1210 each carry an N-linked (GlcNAc...) asparagine glycan. The chain crosses the membrane as a helical span at residues 1243–1263; the sequence is AIVGIGGGGGLLLLVIVAVLI. Positions 1262-1315 form a coiled coil; the sequence is LIAYKRKSRDADRTLKRLQLQMDNLESRVALECKEAFAELQTDIHELTSDLDGA. Over 1264–1894 the chain is Cytoplasmic; the sequence is AYKRKSRDAD…QVVDTMALSS (631 aa).

The protein belongs to the plexin family. In terms of assembly, interacts directly with NRP1 and NRP2. Interacts with PLXN1B. Interacts with FARP2, RND1 and KDR/VEGFR2. Binding of SEMA3A leads to dissociation of FARP2. Interacts with CRMP1, DPYSL2/CRMP2, DPYSL3/CRMP3 and DPYSL4/CRMP4. Interacts (via TIG domains) with TREM2; the interaction mediates SEMA6D binding and signaling through TYROBP. As to expression, ubiquitous.

The protein resides in the cell membrane. Functionally, coreceptor for SEMA3A, SEMA3C, SEMA3F and SEMA6D. Necessary for signaling by class 3 semaphorins and subsequent remodeling of the cytoskeleton. Plays a role in axon guidance, invasive growth and cell migration. Class 3 semaphorins bind to a complex composed of a neuropilin and a plexin. The plexin modulates the affinity of the complex for specific semaphorins, and its cytoplasmic domain is required for the activation of down-stream signaling events in the cytoplasm. Acts as coreceptor of TREM2 for SEMA6D in dendritic cells and is involved in the generation of immune responses and skeletal homeostasis. The polypeptide is Plexin-A1 (Plxna1) (Mus musculus (Mouse)).